The primary structure comprises 108 residues: ATP-dependent Clp protease adapter protein ClpS (108 aa).

Residues 1 to 10 (MADSDKHGDE) show a composition bias toward basic and acidic residues. Residues 1-21 (MADSDKHGDEGPSTGVVVKAK) are disordered.

Belongs to the ClpS family. In terms of assembly, binds to the N-terminal domain of the chaperone ClpA.

Its function is as follows. Involved in the modulation of the specificity of the ClpAP-mediated ATP-dependent protein degradation. In Rhodospirillum centenum (strain ATCC 51521 / SW), this protein is ATP-dependent Clp protease adapter protein ClpS.